The sequence spans 106 residues: Large ribosomal subunit protein uL24 (106 aa).

It belongs to the universal ribosomal protein uL24 family. In terms of assembly, part of the 50S ribosomal subunit.

In terms of biological role, one of two assembly initiator proteins, it binds directly to the 5'-end of the 23S rRNA, where it nucleates assembly of the 50S subunit. Functionally, one of the proteins that surrounds the polypeptide exit tunnel on the outside of the subunit. This is Large ribosomal subunit protein uL24 from Orientia tsutsugamushi (strain Boryong) (Rickettsia tsutsugamushi).